The primary structure comprises 981 residues: Peroxisomal ATPase PEX6 (981 aa).

R119 carries the post-translational modification Omega-N-methylarginine. Residues 471–478 (GPPGSGKT) and 745–752 (GPPGTGKT) contribute to the ATP site.

It belongs to the AAA ATPase family. As to quaternary structure, interacts with PEX1; forming the PEX1-PEX6 AAA ATPase complex, which is composed of a heterohexamer formed by a trimer of PEX1-PEX6 dimers. Interacts with PEX26; interaction is direct and promotes recruitment to peroxisomal membranes. Interacts with ZFAND6. In terms of tissue distribution, in the teeth, expressed in ameloblasts and odontoblasts. Expressed in the retina, at higher levels in the ganglion cell layer and photoreceptor layer at the joint between the outer and inner segments.

Its subcellular location is the cytoplasm. The protein resides in the cytosol. The protein localises to the peroxisome membrane. It localises to the cell projection. It is found in the cilium. Its subcellular location is the photoreceptor outer segment. It catalyses the reaction ATP + H2O = ADP + phosphate + H(+). Its function is as follows. Component of the PEX1-PEX6 AAA ATPase complex, a protein dislocase complex that mediates the ATP-dependent extraction of the PEX5 receptor from peroxisomal membranes, an essential step for PEX5 recycling. Specifically recognizes PEX5 monoubiquitinated at 'Cys-11', and pulls it out of the peroxisome lumen through the PEX2-PEX10-PEX12 retrotranslocation channel. Extraction by the PEX1-PEX6 AAA ATPase complex is accompanied by unfolding of the TPR repeats and release of bound cargo from PEX5. This chain is Peroxisomal ATPase PEX6, found in Mus musculus (Mouse).